We begin with the raw amino-acid sequence, 57 residues long: Small ribosomal subunit protein bS21 (57 aa).

Residues 24–57 (SKSGTLQESRKREFYEKPSVKRKKKSEAARKRKF) are disordered. The segment covering 31–42 (ESRKREFYEKPS) has biased composition (basic and acidic residues). Basic residues predominate over residues 43–57 (VKRKKKSEAARKRKF).

This sequence belongs to the bacterial ribosomal protein bS21 family.

The chain is Small ribosomal subunit protein bS21 (rpsU) from Listeria innocua serovar 6a (strain ATCC BAA-680 / CLIP 11262).